The following is a 380-amino-acid chain: Kappa-type opioid receptor (380 aa).

The Extracellular segment spans residues M1–V57. 2 N-linked (GlcNAc...) asparagine glycosylation sites follow: N25 and N39. Residues I58–I85 form a helical membrane-spanning segment. Over R86 to N95 the chain is Cytoplasmic. Residues I96–Y119 traverse the membrane as a helical segment. Topologically, residues L120–K132 are extracellular. An intrachain disulfide couples C131 to C210. Residues V133–V154 form a helical membrane-spanning segment. Residues D155–L173 lie on the Cytoplasmic side of the membrane. Residues K174 to L196 form a helical membrane-spanning segment. Over G197–W222 the chain is Extracellular. A helical transmembrane segment spans residues D223–T247. Over L248–R274 the chain is Cytoplasmic. A helical membrane pass occupies residues L275–V296. Topologically, residues E297 to S311 are extracellular. The helical transmembrane segment at Y312–L333 threads the bilayer. Residues D334–V380 are Cytoplasmic-facing. A lipid anchor (S-palmitoyl cysteine) is attached at C345.

It belongs to the G-protein coupled receptor 1 family. In terms of assembly, interacts with NHERF1. Interacts with GABARAPL1.

It localises to the cell membrane. Its function is as follows. G-protein coupled opioid receptor that functions as a receptor for endogenous alpha-neoendorphins and dynorphins, but has low affinity for beta-endorphins. Also functions as a receptor for various synthetic opioids and for the psychoactive diterpene salvinorin A. Ligand binding causes a conformation change that triggers signaling via guanine nucleotide-binding proteins (G proteins) and modulates the activity of down-stream effectors, such as adenylate cyclase. Signaling leads to the inhibition of adenylate cyclase activity. Inhibits neurotransmitter release by reducing calcium ion currents and increasing potassium ion conductance. Plays a role in the perception of pain. Plays a role in mediating reduced physical activity upon treatment with synthetic opioids. Plays a role in the regulation of salivation in response to synthetic opioids. May play a role in arousal and regulation of autonomic and neuroendocrine functions. This is Kappa-type opioid receptor (OPRK1) from Bos taurus (Bovine).